An 807-amino-acid polypeptide reads, in one-letter code: Glycerol-3-phosphate acyltransferase (807 aa).

An HXXXXD motif motif is present at residues cysteine 308–methionine 313.

The protein belongs to the GPAT/DAPAT family.

It is found in the cell inner membrane. It catalyses the reaction sn-glycerol 3-phosphate + an acyl-CoA = a 1-acyl-sn-glycero-3-phosphate + CoA. Its pathway is phospholipid metabolism; CDP-diacylglycerol biosynthesis; CDP-diacylglycerol from sn-glycerol 3-phosphate: step 1/3. This chain is Glycerol-3-phosphate acyltransferase, found in Shewanella amazonensis (strain ATCC BAA-1098 / SB2B).